We begin with the raw amino-acid sequence, 658 residues long: Biosynthetic arginine decarboxylase (658 aa).

Position 127 is an N6-(pyridoxal phosphate)lysine (lysine 127). 307–317 (FDVGGGLGVDY) lines the substrate pocket.

It belongs to the Orn/Lys/Arg decarboxylase class-II family. SpeA subfamily. Homotetramer. It depends on pyridoxal 5'-phosphate as a cofactor. Requires Mg(2+) as cofactor. Post-translationally, processed post-translationally to a 70 kDa mature form. In terms of processing, the N-terminus is blocked.

Its subcellular location is the periplasm. It carries out the reaction L-arginine + H(+) = agmatine + CO2. It participates in amine and polyamine biosynthesis; agmatine biosynthesis; agmatine from L-arginine: step 1/1. Its activity is regulated as follows. Down-regulated by polyamine end products putrescine and spermidine. In terms of biological role, catalyzes the biosynthesis of agmatine from arginine. This chain is Biosynthetic arginine decarboxylase (speA), found in Escherichia coli (strain K12).